Consider the following 339-residue polypeptide: Ectoine/5-hydroxyectoine-binding periplasmic protein UehA (339 aa).

An N-terminal signal peptide occupies residues 1–20 (MAQSITFTFGAVAAAGIALA). Residues glutamate 36, arginine 171, asparagine 211, phenylalanine 215, and phenylalanine 236 each coordinate L-ectoine. Cysteine 162 and cysteine 303 are disulfide-bonded.

This sequence belongs to the bacterial solute-binding protein 7 family. Monomer. The complex comprises the extracytoplasmic solute receptor protein UehA, and the two transmembrane proteins UehB and UehC.

It is found in the periplasm. Functionally, part of the tripartite ATP-independent periplasmic (TRAP) transport system UehABC, which imports both ectoine and 5-hydroxyectoine as nutrients, and not as osmoprotectants. UehA binds both ectoine and 5-hydroxyectoine with high specificity and affinity. This Ruegeria pomeroyi (strain ATCC 700808 / DSM 15171 / DSS-3) (Silicibacter pomeroyi) protein is Ectoine/5-hydroxyectoine-binding periplasmic protein UehA.